We begin with the raw amino-acid sequence, 204 residues long: Holliday junction branch migration complex subunit RuvA (204 aa).

Residues 1–63 (MIGWLQGRVL…EDGQFLYGFS (63 aa)) form a domain I region. Residues 64 to 142 (SFLQRQLFRE…KNDLFLCDES (79 aa)) form a domain II region. The flexible linker stretch occupies residues 143–152 (ESSRAPIALS). The tract at residues 152–204 (SASEEAIQALIALELAPAEAELWVKKAQKTLAEDADSAALIKTAFALRLQGAK) is domain III.

It belongs to the RuvA family. Homotetramer. Forms an RuvA(8)-RuvB(12)-Holliday junction (HJ) complex. HJ DNA is sandwiched between 2 RuvA tetramers; dsDNA enters through RuvA and exits via RuvB. An RuvB hexamer assembles on each DNA strand where it exits the tetramer. Each RuvB hexamer is contacted by two RuvA subunits (via domain III) on 2 adjacent RuvB subunits; this complex drives branch migration. In the full resolvosome a probable DNA-RuvA(4)-RuvB(12)-RuvC(2) complex forms which resolves the HJ.

The protein resides in the cytoplasm. Its function is as follows. The RuvA-RuvB-RuvC complex processes Holliday junction (HJ) DNA during genetic recombination and DNA repair, while the RuvA-RuvB complex plays an important role in the rescue of blocked DNA replication forks via replication fork reversal (RFR). RuvA specifically binds to HJ cruciform DNA, conferring on it an open structure. The RuvB hexamer acts as an ATP-dependent pump, pulling dsDNA into and through the RuvAB complex. HJ branch migration allows RuvC to scan DNA until it finds its consensus sequence, where it cleaves and resolves the cruciform DNA. The sequence is that of Holliday junction branch migration complex subunit RuvA from Dichelobacter nodosus (strain VCS1703A).